We begin with the raw amino-acid sequence, 475 residues long: Ankyrin repeat, SAM and basic leucine zipper domain-containing protein 1 (475 aa).

The tract at residues 1–24 is disordered; that stretch reads MAAGPLRGLAVAGGGESSESEDDG. A phosphoserine mark is found at Ser-17, Ser-18, and Ser-20. 6 ANK repeats span residues 45–74, 78–107, 110–144, 148–177, 181–210, and 214–243; these read ERQE…SVDT, YGWT…NASF, DKQT…DPNV, RLMT…EVNT, NGYT…NKMI, and DGKT…PLEG. The region spanning 272 to 334 is the SAM domain; sequence SYTAFGDLEI…KIMAALKELE (63 aa).

As to quaternary structure, interacts with DDX4, PIWIL1, RANBP9 and TDRD1.

It is found in the cytoplasm. Plays a central role during spermatogenesis by repressing transposable elements and preventing their mobilization, which is essential for the germline integrity. Acts via the piRNA metabolic process, which mediates the repression of transposable elements during meiosis by forming complexes composed of piRNAs and Piwi proteins and governs the methylation and subsequent repression of transposons. Its association with pi-bodies suggests a participation in the primary piRNAs metabolic process. Required prior to the pachytene stage to facilitate the production of multiple types of piRNAs, including those associated with repeats involved in the regulation of retrotransposons. May act by mediating protein-protein interactions during germ cell maturation. The sequence is that of Ankyrin repeat, SAM and basic leucine zipper domain-containing protein 1 (ASZ1) from Ovis aries (Sheep).